Consider the following 88-residue polypeptide: Apolipoprotein C-I (88 aa).

The signal sequence occupies residues 1–26 (MRLFLSLPVLVVVLAMVLEGPAPTQA).

Belongs to the apolipoprotein C1 family.

The protein resides in the secreted. Inhibitor of lipoprotein binding to the low density lipoprotein (LDL) receptor, LDL receptor-related protein, and very low density lipoprotein (VLDL) receptor. Associates with high density lipoproteins (HDL) and the triacylglycerol-rich lipoproteins in the plasma and makes up about 10% of the protein of the VLDL and 2% of that of HDL. Appears to interfere directly with fatty acid uptake and is also the major plasma inhibitor of cholesteryl ester transfer protein (CETP). Binds free fatty acids and reduces their intracellular esterification. Modulates the interaction of APOE with beta-migrating VLDL and inhibits binding of beta-VLDL to the LDL receptor-related protein. This is Apolipoprotein C-I (APOC1) from Mirounga angustirostris (Northern elephant seal).